Consider the following 199-residue polypeptide: Chaperone protein TorD (199 aa).

It belongs to the TorD/DmsD family. TorD subfamily.

The protein localises to the cytoplasm. Functionally, involved in the biogenesis of TorA. Acts on TorA before the insertion of the molybdenum cofactor and, as a result, probably favors a conformation of the apoenzyme that is competent for acquiring the cofactor. This is Chaperone protein TorD from Shigella boydii serotype 18 (strain CDC 3083-94 / BS512).